A 388-amino-acid chain; its full sequence is Succinate--CoA ligase [ADP-forming] subunit beta (388 aa).

The region spanning 9 to 245 is the ATP-grasp domain; it reads KELLASYGLP…KSQENERELK (237 aa). ATP is bound by residues lysine 46, 53 to 55, glutamate 100, tyrosine 103, and glutamate 108; that span reads GRG. The Mg(2+) site is built by asparagine 200 and aspartate 214. Substrate contacts are provided by residues asparagine 265 and 322–324; that span reads GIV.

This sequence belongs to the succinate/malate CoA ligase beta subunit family. In terms of assembly, heterotetramer of two alpha and two beta subunits. The cofactor is Mg(2+).

The enzyme catalyses succinate + ATP + CoA = succinyl-CoA + ADP + phosphate. It carries out the reaction GTP + succinate + CoA = succinyl-CoA + GDP + phosphate. Its pathway is carbohydrate metabolism; tricarboxylic acid cycle; succinate from succinyl-CoA (ligase route): step 1/1. In terms of biological role, succinyl-CoA synthetase functions in the citric acid cycle (TCA), coupling the hydrolysis of succinyl-CoA to the synthesis of either ATP or GTP and thus represents the only step of substrate-level phosphorylation in the TCA. The beta subunit provides nucleotide specificity of the enzyme and binds the substrate succinate, while the binding sites for coenzyme A and phosphate are found in the alpha subunit. The protein is Succinate--CoA ligase [ADP-forming] subunit beta of Neisseria gonorrhoeae (strain ATCC 700825 / FA 1090).